The chain runs to 256 residues: Thiazole synthase (256 aa).

Residue lysine 95 is the Schiff-base intermediate with DXP of the active site. Residues glycine 156, 182 to 183 (AG), and 204 to 205 (NT) contribute to the 1-deoxy-D-xylulose 5-phosphate site.

It belongs to the ThiG family. As to quaternary structure, homotetramer. Forms heterodimers with either ThiH or ThiS.

It localises to the cytoplasm. It carries out the reaction [ThiS sulfur-carrier protein]-C-terminal-Gly-aminoethanethioate + 2-iminoacetate + 1-deoxy-D-xylulose 5-phosphate = [ThiS sulfur-carrier protein]-C-terminal Gly-Gly + 2-[(2R,5Z)-2-carboxy-4-methylthiazol-5(2H)-ylidene]ethyl phosphate + 2 H2O + H(+). Its pathway is cofactor biosynthesis; thiamine diphosphate biosynthesis. In terms of biological role, catalyzes the rearrangement of 1-deoxy-D-xylulose 5-phosphate (DXP) to produce the thiazole phosphate moiety of thiamine. Sulfur is provided by the thiocarboxylate moiety of the carrier protein ThiS. In vitro, sulfur can be provided by H(2)S. The protein is Thiazole synthase of Shigella boydii serotype 18 (strain CDC 3083-94 / BS512).